The sequence spans 84 residues: MDNNVDTITLTDEEGKETEFEVITKLDIEDKEYVVVVPKNEEVDEAIALRIDNNDNGEEMLVPVEEDEEFNMVAEAYELLFSEE.

This sequence belongs to the UPF0473 family.

In Clostridium botulinum (strain 657 / Type Ba4), this protein is UPF0473 protein CLJ_B2791.